A 107-amino-acid chain; its full sequence is Large ribosomal subunit protein uL24 (107 aa).

Belongs to the universal ribosomal protein uL24 family. Part of the 50S ribosomal subunit.

Its function is as follows. One of two assembly initiator proteins, it binds directly to the 5'-end of the 23S rRNA, where it nucleates assembly of the 50S subunit. In terms of biological role, one of the proteins that surrounds the polypeptide exit tunnel on the outside of the subunit. This chain is Large ribosomal subunit protein uL24, found in Nitrosomonas eutropha (strain DSM 101675 / C91 / Nm57).